Here is a 558-residue protein sequence, read N- to C-terminus: Chaperonin GroEL 1 (558 aa).

ATP contacts are provided by residues 29 to 32 (TLGP), 86 to 90 (DGTTT), Gly-413, and Asp-494.

The protein belongs to the chaperonin (HSP60) family. Forms a cylinder of 14 subunits composed of two heptameric rings stacked back-to-back. Interacts with the co-chaperonin GroES.

The protein resides in the cytoplasm. The catalysed reaction is ATP + H2O + a folded polypeptide = ADP + phosphate + an unfolded polypeptide.. Functionally, together with its co-chaperonin GroES, plays an essential role in assisting protein folding. The GroEL-GroES system forms a nano-cage that allows encapsulation of the non-native substrate proteins and provides a physical environment optimized to promote and accelerate protein folding. The protein is Chaperonin GroEL 1 of Acaryochloris marina (strain MBIC 11017).